Reading from the N-terminus, the 124-residue chain is Snaclec rhodocetin subunit delta (124 aa).

3 disulfide bridges follow: C1–C12, C29–C120, and C95–C112. The region spanning Y8 to K121 is the C-type lectin domain.

Belongs to the snaclec family. As to quaternary structure, heterotetramer of subunit alpha, beta, gamma and delta; only the gamma and the delta subunits are disulfide-linked. Alpha-beta heterodimer and gamma-delta heterodimer associate orthogonally, giving a cruciform conformation. This heterotetramer may covalently dimerizes thanks to the gamma subunit. In terms of tissue distribution, expressed by the venom gland.

It localises to the secreted. In terms of biological role, potent inhibitor of collagen-induced platelet aggregation. It acts by binding to the integrin alpha2A domain and blocks collagen binding to integrin alpha-2/beta-1 (ITGA2/ITGB1). The gamma/delta subunits mainly contribute to this activity. The chain is Snaclec rhodocetin subunit delta from Calloselasma rhodostoma (Malayan pit viper).